Here is a 733-residue protein sequence, read N- to C-terminus: Folic acid synthesis protein fol1 (733 aa).

2 DHNA regions span residues 55-167 (VVVE…YAER) and 179-277 (IEFS…QIYR). Y281 carries the phosphotyrosine modification. An HPK region spans residues 295-454 (NKIAYLSFGS…LPSQGIRLYS (160 aa)). Residues 465 to 724 (ALTMGILNVT…DTKEMSKVVG (260 aa)) form the Pterin-binding domain. The interval 467–733 (TMGILNVTPD…GMANAIRYVP (267 aa)) is DHPS. N472 is a binding site for Mg(2+). Residues T511, D546, N565, D637, K677, and 712–714 (RVH) each bind (7,8-dihydropterin-6-yl)methyl diphosphate.

This sequence in the N-terminal section; belongs to the DHNA family. The protein in the central section; belongs to the HPPK family. It in the C-terminal section; belongs to the DHPS family. It depends on Mg(2+) as a cofactor.

Its subcellular location is the cytoplasm. It carries out the reaction 7,8-dihydroneopterin = 6-hydroxymethyl-7,8-dihydropterin + glycolaldehyde. The catalysed reaction is 6-hydroxymethyl-7,8-dihydropterin + ATP = (7,8-dihydropterin-6-yl)methyl diphosphate + AMP + H(+). The enzyme catalyses (7,8-dihydropterin-6-yl)methyl diphosphate + 4-aminobenzoate = 7,8-dihydropteroate + diphosphate. It functions in the pathway cofactor biosynthesis; tetrahydrofolate biosynthesis; 2-amino-4-hydroxy-6-hydroxymethyl-7,8-dihydropteridine diphosphate from 7,8-dihydroneopterin triphosphate: step 3/4. It participates in cofactor biosynthesis; tetrahydrofolate biosynthesis; 2-amino-4-hydroxy-6-hydroxymethyl-7,8-dihydropteridine diphosphate from 7,8-dihydroneopterin triphosphate: step 4/4. The protein operates within cofactor biosynthesis; tetrahydrofolate biosynthesis; 7,8-dihydrofolate from 2-amino-4-hydroxy-6-hydroxymethyl-7,8-dihydropteridine diphosphate and 4-aminobenzoate: step 1/2. Catalyzes three sequential steps of tetrahydrofolate biosynthesis. In Schizosaccharomyces pombe (strain 972 / ATCC 24843) (Fission yeast), this protein is Folic acid synthesis protein fol1 (fol1).